The chain runs to 267 residues: MRYIIILAVLFINSIHAKITSYKFESVNFDSKIEWTGDGLYNISLKNYGIKTWQTMYTNVPEGTYDISGFPKNDFVSFWVKFEQGDYKVEEYCTGLCVEVKIGPPTVILTEYDDHINLFIEHPYATRGSKKIPIYKRGDMCDIYLLYTANFTFGDSEEPVTYDIDDYDCTSTGCSIDFATTEKVCVTAQGATEGFLEKITPWSSEVCLTPKKNVYTCAIRSKEDVPNFKDKIARVITRKFNKQSQSYLTKFLGSTSNDVTTFLSILD.

Residues M1–A17 form the signal peptide. N-linked (GlcNAc...) asparagine; by host glycosylation is found at N42 and N150.

The protein belongs to the type II cytokine receptor family. In terms of assembly, homodimer. Interacts with host IFNG.

It is found in the secreted. In terms of biological role, counteracts the antiviral effects of host IFN-gamma. Acts as a soluble IFN-gamma receptor and thus inhibits the interaction between host IFN-gamma and its receptor. The protein is Soluble interferon gamma receptor OPG193 (OPG193) of Cynomys gunnisoni (Gunnison's prairie dog).